The sequence spans 126 residues: Large-conductance mechanosensitive channel (126 aa).

3 consecutive transmembrane segments (helical) span residues 14 to 34, 40 to 60, and 67 to 87; these read VIDL…VTSL, MPLL…FTFV, and GLFI…FLFI.

This sequence belongs to the MscL family. In terms of assembly, homopentamer.

It is found in the cell membrane. Functionally, channel that opens in response to stretch forces in the membrane lipid bilayer. May participate in the regulation of osmotic pressure changes within the cell. This chain is Large-conductance mechanosensitive channel, found in Bacillus licheniformis (strain ATCC 14580 / DSM 13 / JCM 2505 / CCUG 7422 / NBRC 12200 / NCIMB 9375 / NCTC 10341 / NRRL NRS-1264 / Gibson 46).